The following is a 163-amino-acid chain: 3-isopropylmalate dehydratase small subunit (163 aa).

Belongs to the LeuD family. LeuD type 2 subfamily. As to quaternary structure, heterodimer of LeuC and LeuD.

The enzyme catalyses (2R,3S)-3-isopropylmalate = (2S)-2-isopropylmalate. The protein operates within amino-acid biosynthesis; L-leucine biosynthesis; L-leucine from 3-methyl-2-oxobutanoate: step 2/4. In terms of biological role, catalyzes the isomerization between 2-isopropylmalate and 3-isopropylmalate, via the formation of 2-isopropylmaleate. The sequence is that of 3-isopropylmalate dehydratase small subunit from Endomicrobium trichonymphae.